The sequence spans 459 residues: ATP synthase subunit beta (459 aa).

149-156 (GGAGVGKT) contributes to the ATP binding site.

This sequence belongs to the ATPase alpha/beta chains family. In terms of assembly, F-type ATPases have 2 components, CF(1) - the catalytic core - and CF(0) - the membrane proton channel. CF(1) has five subunits: alpha(3), beta(3), gamma(1), delta(1), epsilon(1). CF(0) has three main subunits: a(1), b(2) and c(9-12). The alpha and beta chains form an alternating ring which encloses part of the gamma chain. CF(1) is attached to CF(0) by a central stalk formed by the gamma and epsilon chains, while a peripheral stalk is formed by the delta and b chains.

The protein localises to the cell inner membrane. It carries out the reaction ATP + H2O + 4 H(+)(in) = ADP + phosphate + 5 H(+)(out). In terms of biological role, produces ATP from ADP in the presence of a proton gradient across the membrane. The catalytic sites are hosted primarily by the beta subunits. This chain is ATP synthase subunit beta, found in Pseudomonas savastanoi pv. phaseolicola (strain 1448A / Race 6) (Pseudomonas syringae pv. phaseolicola (strain 1448A / Race 6)).